Consider the following 458-residue polypeptide: ATP synthase subunit beta (458 aa).

148-155 provides a ligand contact to ATP; the sequence is GGAGVGKT.

Belongs to the ATPase alpha/beta chains family. In terms of assembly, F-type ATPases have 2 components, CF(1) - the catalytic core - and CF(0) - the membrane proton channel. CF(1) has five subunits: alpha(3), beta(3), gamma(1), delta(1), epsilon(1). CF(0) has three main subunits: a(1), b(2) and c(9-12). The alpha and beta chains form an alternating ring which encloses part of the gamma chain. CF(1) is attached to CF(0) by a central stalk formed by the gamma and epsilon chains, while a peripheral stalk is formed by the delta and b chains.

It is found in the cell inner membrane. It carries out the reaction ATP + H2O + 4 H(+)(in) = ADP + phosphate + 5 H(+)(out). In terms of biological role, produces ATP from ADP in the presence of a proton gradient across the membrane. The catalytic sites are hosted primarily by the beta subunits. The polypeptide is ATP synthase subunit beta (Pseudomonas aeruginosa (strain LESB58)).